The chain runs to 380 residues: Anhydro-N-acetylmuramic acid kinase (380 aa).

Residue 17-24 (GTSMDGAD) coordinates ATP.

It belongs to the anhydro-N-acetylmuramic acid kinase family.

The enzyme catalyses 1,6-anhydro-N-acetyl-beta-muramate + ATP + H2O = N-acetyl-D-muramate 6-phosphate + ADP + H(+). Its pathway is amino-sugar metabolism; 1,6-anhydro-N-acetylmuramate degradation. It participates in cell wall biogenesis; peptidoglycan recycling. Its function is as follows. Catalyzes the specific phosphorylation of 1,6-anhydro-N-acetylmuramic acid (anhMurNAc) with the simultaneous cleavage of the 1,6-anhydro ring, generating MurNAc-6-P. Is required for the utilization of anhMurNAc either imported from the medium or derived from its own cell wall murein, and thus plays a role in cell wall recycling. This is Anhydro-N-acetylmuramic acid kinase from Cupriavidus metallidurans (strain ATCC 43123 / DSM 2839 / NBRC 102507 / CH34) (Ralstonia metallidurans).